Here is a 75-residue protein sequence, read N- to C-terminus: RNA-binding protein KhpA (75 aa).

The KH domain occupies 29–75 (SIILELKVSPEDMGKVIGKQGRIAKAIRTVVKAAAIKENKKVVVEII).

Belongs to the KhpA RNA-binding protein family. Forms a complex with KhpB.

The protein localises to the cytoplasm. In terms of biological role, a probable RNA chaperone. Forms a complex with KhpB which binds to cellular RNA and controls its expression. Plays a role in peptidoglycan (PG) homeostasis and cell length regulation. The chain is RNA-binding protein KhpA from Clostridium perfringens (strain 13 / Type A).